Consider the following 418-residue polypeptide: UDP-N-acetylglucosamine 1-carboxyvinyltransferase (418 aa).

Position 23-24 (23-24 (KN)) interacts with phosphoenolpyruvate. Residue arginine 93 coordinates UDP-N-acetyl-alpha-D-glucosamine. Residue aspartate 117 is the Proton donor of the active site. Residues aspartate 305 and valine 327 each coordinate UDP-N-acetyl-alpha-D-glucosamine.

Belongs to the EPSP synthase family. MurA subfamily.

It is found in the cytoplasm. The enzyme catalyses phosphoenolpyruvate + UDP-N-acetyl-alpha-D-glucosamine = UDP-N-acetyl-3-O-(1-carboxyvinyl)-alpha-D-glucosamine + phosphate. It functions in the pathway cell wall biogenesis; peptidoglycan biosynthesis. In terms of biological role, cell wall formation. Adds enolpyruvyl to UDP-N-acetylglucosamine. The polypeptide is UDP-N-acetylglucosamine 1-carboxyvinyltransferase (Mycobacterium bovis (strain ATCC BAA-935 / AF2122/97)).